Here is a 156-residue protein sequence, read N- to C-terminus: 6,7-dimethyl-8-ribityllumazine synthase (156 aa).

Residues F23, 57 to 59 (AYE), and 81 to 83 (AVI) each bind 5-amino-6-(D-ribitylamino)uracil. 86 to 87 (ST) serves as a coordination point for (2S)-2-hydroxy-3-oxobutyl phosphate. H89 serves as the catalytic Proton donor. F114 is a binding site for 5-amino-6-(D-ribitylamino)uracil. Residue R128 coordinates (2S)-2-hydroxy-3-oxobutyl phosphate.

The protein belongs to the DMRL synthase family.

It carries out the reaction (2S)-2-hydroxy-3-oxobutyl phosphate + 5-amino-6-(D-ribitylamino)uracil = 6,7-dimethyl-8-(1-D-ribityl)lumazine + phosphate + 2 H2O + H(+). The protein operates within cofactor biosynthesis; riboflavin biosynthesis; riboflavin from 2-hydroxy-3-oxobutyl phosphate and 5-amino-6-(D-ribitylamino)uracil: step 1/2. Catalyzes the formation of 6,7-dimethyl-8-ribityllumazine by condensation of 5-amino-6-(D-ribitylamino)uracil with 3,4-dihydroxy-2-butanone 4-phosphate. This is the penultimate step in the biosynthesis of riboflavin. The protein is 6,7-dimethyl-8-ribityllumazine synthase of Helicobacter hepaticus (strain ATCC 51449 / 3B1).